A 201-amino-acid chain; its full sequence is Peptidyl-tRNA hydrolase (201 aa).

Tyrosine 15 lines the tRNA pocket. Histidine 20 serves as the catalytic Proton acceptor. TRNA is bound by residues tyrosine 66, asparagine 68, and asparagine 114.

This sequence belongs to the PTH family. Monomer.

The protein localises to the cytoplasm. It carries out the reaction an N-acyl-L-alpha-aminoacyl-tRNA + H2O = an N-acyl-L-amino acid + a tRNA + H(+). Its function is as follows. Hydrolyzes ribosome-free peptidyl-tRNAs (with 1 or more amino acids incorporated), which drop off the ribosome during protein synthesis, or as a result of ribosome stalling. Functionally, catalyzes the release of premature peptidyl moieties from peptidyl-tRNA molecules trapped in stalled 50S ribosomal subunits, and thus maintains levels of free tRNAs and 50S ribosomes. This chain is Peptidyl-tRNA hydrolase, found in Burkholderia thailandensis (strain ATCC 700388 / DSM 13276 / CCUG 48851 / CIP 106301 / E264).